We begin with the raw amino-acid sequence, 648 residues long: Transmembrane 9 superfamily member 8 (648 aa).

The signal sequence occupies residues 1 to 33 (MAMEFLRSSRRILESSGCAIALIFLLFIHGAHS). The Lumenal portion of the chain corresponds to 34–285 (FYLPGVAPQD…YLLMSDNQIH (252 aa)). The chain crosses the membrane as a helical span at residues 286 to 306 (WFSIVNSLMIVLFLSGMVAMI). Residues 307-355 (MLRTLYRDISRYNELETQEEAQEETGWKLVHGDVFRLPTNSDLLCVYVG) lie on the Cytoplasmic side of the membrane. Residues 356–376 (TGVQCLGMVFVTMIFAMLGFL) traverse the membrane as a helical segment. The Lumenal segment spans residues 377–381 (SPSNR). The helical transmembrane segment at 382-402 (GGLMTAMLLLWVFMGLFAGYA) threads the bilayer. Topologically, residues 403-422 (SSRLYKMFKGTEWKRIAFRT) are cytoplasmic. Residues 423-443 (AFLFPAVVSAIFFVLNALIWG) form a helical membrane-spanning segment. Residues 444-455 (QKSSGAVPFGTM) lie on the Lumenal side of the membrane. The helical transmembrane segment at 456–476 (FALIFLWFGISVPLVFVGGYI) threads the bilayer. Residues 477-506 (GFKKPAADDPVKTNKIPRQIPEQAWYMNPV) are Cytoplasmic-facing. A helical transmembrane segment spans residues 507–527 (FSILIGGILPFGAVFIELFFI). The Lumenal portion of the chain corresponds to 528–538 (LTSIWLNQFYY). Residues 539–559 (IFGFLFLVFVILIVTCAEITV) form a helical membrane-spanning segment. The Cytoplasmic portion of the chain corresponds to 560-577 (VLCYFQLCSEDYLWWWRS). The chain crosses the membrane as a helical span at residues 578–598 (YLTSGSSALYLFLYATFYFFT). The Lumenal portion of the chain corresponds to 599–604 (KLQITK). The helical transmembrane segment at 605-625 (LVSAMLYFGYMLIASYAFFVL) threads the bilayer. Residues 626-648 (TGTIGFYACLWFTRLIYSSVKID) lie on the Cytoplasmic side of the membrane. The Endoplasmic reticulum export signal motif lies at 637 to 642 (FTRLIY). The short motif at 646–648 (KID) is the Golgi retention signal element.

Belongs to the nonaspanin (TM9SF) (TC 9.A.2) family.

The protein localises to the endosome membrane. It is found in the golgi apparatus membrane. The sequence is that of Transmembrane 9 superfamily member 8 from Arabidopsis thaliana (Mouse-ear cress).